The following is a 411-amino-acid chain: Pre-mRNA-splicing factor dre4 (411 aa).

Residues 3-36 (QPLPPGWTEHKAPSGIPYYWNAELKKSTYQRPSF) enclose the WW 1 domain. The disordered stretch occupies residues 65-84 (NAEERKNSRDLRKQLPDRPK). The segment covering 66-83 (AEERKNSRDLRKQLPDRP) has biased composition (basic and acidic residues). The WW 2 domain maps to 89–122 (IPNNDSWVVVFTKKNRYFFHNLKSHESYWEPPLE). The segment at 138–209 (ISKDSSQSQN…KSHSAEELEF (72 aa)) is disordered. Residues 140 to 151 (KDSSQSQNVDSG) are compositionally biased toward polar residues. A compositionally biased stretch (basic and acidic residues) spans 152 to 166 (KTNHEEIHESRHLQT). The span at 167–179 (EIEEPSGLEESSE) shows a compositional bias: acidic residues. The FF domain maps to 239–293 (TDDARRVFTELLKDKNIGAYQPWELVYPKLLDDDRFYVLDSGERRKEVFEEYCKS).

Component of the spliceosomal complex. Interacts with prp19.

The protein localises to the nucleus. Functionally, component of the spliceosome involved in mRNA processing. The protein is Pre-mRNA-splicing factor dre4 (dre4) of Schizosaccharomyces pombe (strain 972 / ATCC 24843) (Fission yeast).